The primary structure comprises 111 residues: Nucleoid-associated protein TTE0040 (111 aa).

This sequence belongs to the YbaB/EbfC family. In terms of assembly, homodimer.

It is found in the cytoplasm. It localises to the nucleoid. Binds to DNA and alters its conformation. May be involved in regulation of gene expression, nucleoid organization and DNA protection. The chain is Nucleoid-associated protein TTE0040 from Caldanaerobacter subterraneus subsp. tengcongensis (strain DSM 15242 / JCM 11007 / NBRC 100824 / MB4) (Thermoanaerobacter tengcongensis).